Here is a 396-residue protein sequence, read N- to C-terminus: NADH-quinone oxidoreductase subunit D (396 aa).

The protein belongs to the complex I 49 kDa subunit family. In terms of assembly, NDH-1 is composed of 14 different subunits. Subunits NuoB, C, D, E, F, and G constitute the peripheral sector of the complex.

It is found in the cell inner membrane. It catalyses the reaction a quinone + NADH + 5 H(+)(in) = a quinol + NAD(+) + 4 H(+)(out). NDH-1 shuttles electrons from NADH, via FMN and iron-sulfur (Fe-S) centers, to quinones in the respiratory chain. The immediate electron acceptor for the enzyme in this species is believed to be ubiquinone. Couples the redox reaction to proton translocation (for every two electrons transferred, four hydrogen ions are translocated across the cytoplasmic membrane), and thus conserves the redox energy in a proton gradient. The polypeptide is NADH-quinone oxidoreductase subunit D (Orientia tsutsugamushi (strain Boryong) (Rickettsia tsutsugamushi)).